The sequence spans 243 residues: Geranylgeranylglyceryl phosphate synthase (243 aa).

Mg(2+) is bound by residues Asp22 and Ser51. Residues 170–176, 201–202, and 223–224 contribute to the sn-glycerol 1-phosphate site; these read YLESGSG, GG, and GT.

It belongs to the GGGP/HepGP synthase family. Group II subfamily. It depends on Mg(2+) as a cofactor.

The protein resides in the cytoplasm. It carries out the reaction sn-glycerol 1-phosphate + (2E,6E,10E)-geranylgeranyl diphosphate = sn-3-O-(geranylgeranyl)glycerol 1-phosphate + diphosphate. It participates in membrane lipid metabolism; glycerophospholipid metabolism. Prenyltransferase that catalyzes the transfer of the geranylgeranyl moiety of geranylgeranyl diphosphate (GGPP) to the C3 hydroxyl of sn-glycerol-1-phosphate (G1P). This reaction is the first ether-bond-formation step in the biosynthesis of archaeal membrane lipids. The sequence is that of Geranylgeranylglyceryl phosphate synthase from Picrophilus torridus (strain ATCC 700027 / DSM 9790 / JCM 10055 / NBRC 100828 / KAW 2/3).